Here is a 264-residue protein sequence, read N- to C-terminus: Thymidylate synthase (264 aa).

Position 21 (Arg-21) interacts with dUMP. Residue His-51 coordinates (6R)-5,10-methylene-5,6,7,8-tetrahydrofolate. Residue Arg-126 to Arg-127 participates in dUMP binding. Cys-146 acts as the Nucleophile in catalysis. DUMP contacts are provided by residues Arg-166–Asp-169, Asn-177, and His-207–Tyr-209. Asp-169 contributes to the (6R)-5,10-methylene-5,6,7,8-tetrahydrofolate binding site. Ala-263 serves as a coordination point for (6R)-5,10-methylene-5,6,7,8-tetrahydrofolate.

Belongs to the thymidylate synthase family. Bacterial-type ThyA subfamily. As to quaternary structure, homodimer.

It localises to the cytoplasm. The enzyme catalyses dUMP + (6R)-5,10-methylene-5,6,7,8-tetrahydrofolate = 7,8-dihydrofolate + dTMP. Its pathway is pyrimidine metabolism; dTTP biosynthesis. Catalyzes the reductive methylation of 2'-deoxyuridine-5'-monophosphate (dUMP) to 2'-deoxythymidine-5'-monophosphate (dTMP) while utilizing 5,10-methylenetetrahydrofolate (mTHF) as the methyl donor and reductant in the reaction, yielding dihydrofolate (DHF) as a by-product. This enzymatic reaction provides an intracellular de novo source of dTMP, an essential precursor for DNA biosynthesis. This chain is Thymidylate synthase, found in Ralstonia nicotianae (strain ATCC BAA-1114 / GMI1000) (Ralstonia solanacearum).